A 288-amino-acid polypeptide reads, in one-letter code: Oxaloacetate decarboxylase (288 aa).

Residue serine 47 coordinates substrate. Residue aspartate 85 participates in Mg(2+) binding. Positions 156 and 232 each coordinate substrate.

It belongs to the isocitrate lyase/PEP mutase superfamily. Oxaloacetate decarboxylase family. As to quaternary structure, homotetramer; dimer of dimers. The cofactor is Mg(2+).

It catalyses the reaction oxaloacetate + H(+) = pyruvate + CO2. Catalyzes the decarboxylation of oxaloacetate into pyruvate. Seems to play a role in maintaining cellular concentrations of bicarbonate and pyruvate. In Rhodopseudomonas palustris (strain TIE-1), this protein is Oxaloacetate decarboxylase.